The chain runs to 222 residues: Physcion biosynthesis cluster O-methyltransferase (222 aa).

Belongs to the methyltransferase superfamily.

It catalyses the reaction emodin + S-adenosyl-L-methionine = physcion + S-adenosyl-L-homocysteine. It functions in the pathway secondary metabolite biosynthesis. Functionally, O-methyltransferase; part of the gene cluster that mediates the biosynthesis of physcion, a natural anthraquinone fungicide that can prevent plant fungal infections. Within the pathway, the O-methyltransferase AcOMT catalyzes the last step by transferring a methyl group to C-6 hydroxyl of emodin to form physcion. AcOMT may also methylate the C-6 hydroxyl group of emodin anthrone to produce physcion-anthrone B. The pathway begins with the polyketide synthase AcPKS that condenses 8 malonyl-CoA units to synthesize atrochrysone thioester which is released from the synthase by the atrochrysone carboxyl ACP thioesterase AcTE that breaks the thioester bond and leads to free atrochrysone carboxylic acid. Spontaneous decarboxylation of atrochrysone carboxylic acid leads to the formation of atrochrysone. Then, atrochrysone undergoes spontaneous dehydration and oxidation, giving the products emodin anthrone and emodin. The O-methyltransferase AcOMT then methylates the C-6 hydroxyl of emodin to form physcion. The protein is Physcion biosynthesis cluster O-methyltransferase of Aspergillus chevalieri (Eurotium chevalieri).